A 324-amino-acid polypeptide reads, in one-letter code: tRNA dimethylallyltransferase (324 aa).

17–24 serves as a coordination point for ATP; it reads GPTASGKT. 19–24 contributes to the substrate binding site; it reads TASGKT. Interaction with substrate tRNA regions lie at residues 42 to 45, 166 to 170, and 251 to 256; these read DSAL, QRIQR, and RCVGYR.

The protein belongs to the IPP transferase family. Monomer. The cofactor is Mg(2+).

It catalyses the reaction adenosine(37) in tRNA + dimethylallyl diphosphate = N(6)-dimethylallyladenosine(37) in tRNA + diphosphate. In terms of biological role, catalyzes the transfer of a dimethylallyl group onto the adenine at position 37 in tRNAs that read codons beginning with uridine, leading to the formation of N6-(dimethylallyl)adenosine (i(6)A). This Burkholderia pseudomallei (strain 668) protein is tRNA dimethylallyltransferase.